The primary structure comprises 98 residues: Putative septation protein SpoVG (98 aa).

It belongs to the SpoVG family.

Functionally, essential for sporulation. Interferes with or is a negative regulator of the pathway leading to asymmetric septation. This chain is Putative septation protein SpoVG, found in Shouchella clausii (strain KSM-K16) (Alkalihalobacillus clausii).